The primary structure comprises 236 residues: NAD(P)H-hydrate epimerase (236 aa).

The YjeF N-terminal domain maps to 11 to 217; that stretch reads AAALDRELMS…SIAKKYDFDV (207 aa). 61-65 contributes to the (6S)-NADPHX binding site; it reads NNGGD. K(+)-binding residues include asparagine 62 and aspartate 123. (6S)-NADPHX contacts are provided by residues 127-133 and aspartate 156; that span reads GFSFSGE. Serine 159 is a binding site for K(+).

This sequence belongs to the NnrE/AIBP family. Requires K(+) as cofactor.

It localises to the cytoplasm. It is found in the mitochondrion. The catalysed reaction is (6R)-NADHX = (6S)-NADHX. The enzyme catalyses (6R)-NADPHX = (6S)-NADPHX. Its function is as follows. Catalyzes the epimerization of the S- and R-forms of NAD(P)HX, a damaged form of NAD(P)H that is a result of enzymatic or heat-dependent hydration. This is a prerequisite for the S-specific NAD(P)H-hydrate dehydratase to allow the repair of both epimers of NAD(P)HX. This chain is NAD(P)H-hydrate epimerase, found in Neurospora crassa (strain ATCC 24698 / 74-OR23-1A / CBS 708.71 / DSM 1257 / FGSC 987).